We begin with the raw amino-acid sequence, 705 residues long: Forkhead box protein P1 (705 aa).

Positions 1-19 are enriched in polar residues; it reads MMQESGSETKSNGSAIQNG. Residues 1–41 are disordered; sequence MMQESGSETKSNGSAIQNGSSGGNHLLECGALRDTRSNGEA. S113 is subject to Phosphoserine. 2 disordered regions span residues 267 to 286 and 291 to 326; these read HTAE…TSTC and APSK…EHPH. Polar residues-rich tracts occupy residues 276–286 and 291–311; these read NHSSLDLTSTC and APSK…QLSV. The span at 314 to 326 shows a compositional bias: basic and acidic residues; sequence PKRESLSHEEHPH. Residue K315 forms a Glycyl lysine isopeptide (Lys-Gly) (interchain with G-Cter in SUMO2) linkage. Residues 334–359 form a C2H2-type zinc finger; that stretch reads GVCKWPGCEAVCDDFPAFLKHLNSEH. The leucine-zipper stretch occupies residues 376–397; that stretch reads VQQLELQLAKDKERLQAMMTHL. Residues K400 and K405 each participate in a glycyl lysine isopeptide (Lys-Gly) (interchain with G-Cter in SUMO2) cross-link. A CTBP1-binding region spans residues 410–414; the sequence is PLNLV. Residues 418–431 are compositionally biased toward polar residues; that stretch reads TLSKSASEASPQSL. The interval 418–450 is disordered; it reads TLSKSASEASPQSLPHTPTTPTAPLTPVTQGPS. A compositionally biased stretch (low complexity) spans 432-446; that stretch reads PHTPTTPTAPLTPVT. K470 is covalently cross-linked (Glycyl lysine isopeptide (Lys-Gly) (interchain with G-Cter in SUMO2)). The fork-head DNA-binding region spans 493 to 583; that stretch reads RPPFTYASLI…PQKISGNPSL (91 aa). The segment at 639–705 is disordered; it reads EHTNSNESDS…EDEPVNEDME (67 aa). A compositionally biased stretch (polar residues) spans 640–651; the sequence is HTNSNESDSSPG. At T681 the chain carries Phosphothreonine. S686 carries the post-translational modification Phosphoserine. The span at 695-705 shows a compositional bias: acidic residues; sequence YEDEPVNEDME.

As to quaternary structure, forms homodimers and heterodimers with FOXP2 and FOXP4. Dimerization is required for DNA-binding. Self-associates. Interacts with CTBP1. Interacts with NCOR2 and AR. Interacts with FOXP2. Interacts with TBR1. Interacts with AURKA; this interaction facilitates the phosphorylation of FOXP1, which suppresses the expression of FBXL7. Interacts with ZMYM2. Isoform 5 is specifically expressed in embryonic stem cells. Highest expression in the lung, brain, and spleen. Lower expression in heart, skeletal muscle, kidney, small intestine (isoform 3 not present) and liver.

Its subcellular location is the nucleus. In terms of biological role, transcriptional repressor. Can act with CTBP1 to synergistically repress transcription but CTPBP1 is not essential. Plays an important role in the specification and differentiation of lung epithelium. Acts cooperatively with FOXP4 to regulate lung secretory epithelial cell fate and regeneration by restricting the goblet cell lineage program; the function may involve regulation of AGR2. Essential transcriptional regulator of B-cell development. Involved in regulation of cardiac muscle cell proliferation. Involved in the columnar organization of spinal motor neurons. Promotes the formation of the lateral motor neuron column (LMC) and the preganglionic motor column (PGC) and is required for respective appropriate motor axon projections. The segment-appropriate generation of spinal cord motor columns requires cooperation with other Hox proteins. Can regulate PITX3 promoter activity; may promote midbrain identity in embryonic stem cell-derived dopamine neurons by regulating PITX3. Negatively regulates the differentiation of T follicular helper cells T(FH)s. Involved in maintenance of hair follicle stem cell quiescence; the function probably involves regulation of FGF18. Represses transcription of various pro-apoptotic genes and cooperates with NF-kappa B-signaling in promoting B-cell expansion by inhibition of caspase-dependent apoptosis. Binds to CSF1R promoter elements and is involved in regulation of monocyte differentiation and macrophage functions; repression of CSF1R in monocytes seems to involve NCOR2 as corepressor. Involved in endothelial cell proliferation, tube formation and migration indicative for a role in angiogenesis; the role in neovascularization seems to implicate suppression of SEMA5B. Can negatively regulate androgen receptor signaling. Acts as a transcriptional activator of the FBXL7 promoter; this activity is regulated by AURKA. Involved in transcriptional regulation in embryonic stem cells (ESCs). Stimulates expression of transcription factors that are required for pluripotency and decreases expression of differentiation-associated genes. Has distinct DNA-binding specifities as compared to the canonical form and preferentially binds DNA with the sequence 5'-CGATACAA-3' (or closely related sequences). Promotes ESC self-renewal and pluripotency. This chain is Forkhead box protein P1 (Foxp1), found in Mus musculus (Mouse).